Consider the following 464-residue polypeptide: Kynureninase (464 aa).

Met-1 carries the post-translational modification N-acetylmethionine. Residues Leu-137, Thr-138, 165–168 (FPSD), Ser-221, Asp-250, His-253, and Tyr-275 each bind pyridoxal 5'-phosphate. At Lys-276 the chain carries N6-(pyridoxal phosphate)lysine. Trp-305 and Asn-333 together coordinate pyridoxal 5'-phosphate.

The protein belongs to the kynureninase family. In terms of assembly, homodimer. Pyridoxal 5'-phosphate serves as cofactor. In terms of tissue distribution, high levels in liver and kidney. Also detected in heart, retina, ovary. Lung, testis and brain.

The protein resides in the cytoplasm. It is found in the cytosol. The catalysed reaction is L-kynurenine + H2O = anthranilate + L-alanine + H(+). It catalyses the reaction 3-hydroxy-L-kynurenine + H2O = 3-hydroxyanthranilate + L-alanine + H(+). It functions in the pathway amino-acid degradation; L-kynurenine degradation; L-alanine and anthranilate from L-kynurenine: step 1/1. The protein operates within cofactor biosynthesis; NAD(+) biosynthesis; quinolinate from L-kynurenine: step 2/3. Its activity is regulated as follows. Inhibited by o-methylbenzoylalanine (OMBA). Its function is as follows. Catalyzes the cleavage of L-kynurenine (L-Kyn) and L-3-hydroxykynurenine (L-3OHKyn) into anthranilic acid (AA) and 3-hydroxyanthranilic acid (3-OHAA), respectively. Has a preference for the L-3-hydroxy form. Also has cysteine-conjugate-beta-lyase activity. In Rattus norvegicus (Rat), this protein is Kynureninase (Kynu).